The following is a 243-amino-acid chain: Chromosome partition protein MukE (243 aa).

The disordered stretch occupies residues 223 to 243 (LMENDTKSADEIDEEFDGEQE). Acidic residues predominate over residues 233-243 (EIDEEFDGEQE).

This sequence belongs to the MukE family. Interacts, and probably forms a ternary complex, with MukF and MukB. The complex formation is stimulated by calcium or magnesium.

It is found in the cytoplasm. Its subcellular location is the nucleoid. Its function is as follows. Involved in chromosome condensation, segregation and cell cycle progression. May participate in facilitating chromosome segregation by condensation DNA from both sides of a centrally located replisome during cell division. Probably acts via its interaction with MukB and MukF. In Haemophilus influenzae (strain ATCC 51907 / DSM 11121 / KW20 / Rd), this protein is Chromosome partition protein MukE.